Reading from the N-terminus, the 450-residue chain is Tubulin alpha-3 chain (450 aa).

Positions 11, 71, 144, 145, 179, 206, and 228 each coordinate GTP. A Mg(2+)-binding site is contributed by Glu71. Residue Glu254 is part of the active site.

Belongs to the tubulin family. In terms of assembly, dimer of alpha and beta chains. A typical microtubule is a hollow water-filled tube with an outer diameter of 25 nm and an inner diameter of 15 nM. Alpha-beta heterodimers associate head-to-tail to form protofilaments running lengthwise along the microtubule wall with the beta-tubulin subunit facing the microtubule plus end conferring a structural polarity. Microtubules usually have 13 protofilaments but different protofilament numbers can be found in some organisms and specialized cells. It depends on Mg(2+) as a cofactor. In terms of processing, undergoes a tyrosination/detyrosination cycle, the cyclic removal and re-addition of a C-terminal tyrosine residue by the enzymes tubulin tyrosine carboxypeptidase (TTCP) and tubulin tyrosine ligase (TTL), respectively.

It localises to the cytoplasm. Its subcellular location is the cytoskeleton. It carries out the reaction GTP + H2O = GDP + phosphate + H(+). Its function is as follows. Tubulin is the major constituent of microtubules, a cylinder consisting of laterally associated linear protofilaments composed of alpha- and beta-tubulin heterodimers. Microtubules grow by the addition of GTP-tubulin dimers to the microtubule end, where a stabilizing cap forms. Below the cap, tubulin dimers are in GDP-bound state, owing to GTPase activity of alpha-tubulin. In Eleusine indica (Goosegrass), this protein is Tubulin alpha-3 chain (TUBA3).